A 137-amino-acid chain; its full sequence is Large ribosomal subunit protein uL16 (137 aa).

Belongs to the universal ribosomal protein uL16 family. In terms of assembly, part of the 50S ribosomal subunit.

In terms of biological role, binds 23S rRNA and is also seen to make contacts with the A and possibly P site tRNAs. The chain is Large ribosomal subunit protein uL16 from Azotobacter vinelandii (strain DJ / ATCC BAA-1303).